A 340-amino-acid polypeptide reads, in one-letter code: CaiB/baiF CoA-transferase family protein ZK892.4 (340 aa).

The active-site Nucleophile is Asp-154.

It belongs to the CoA-transferase III family.

The chain is CaiB/baiF CoA-transferase family protein ZK892.4 from Caenorhabditis elegans.